The sequence spans 86 residues: Large ribosomal subunit protein bL28 (86 aa).

Belongs to the bacterial ribosomal protein bL28 family.

This Bacteroides fragilis (strain ATCC 25285 / DSM 2151 / CCUG 4856 / JCM 11019 / LMG 10263 / NCTC 9343 / Onslow / VPI 2553 / EN-2) protein is Large ribosomal subunit protein bL28.